The following is a 325-amino-acid chain: Heme A synthase (325 aa).

5 helical membrane-spanning segments follow: residues 6–26, 88–108, 116–136, 155–175, and 184–204; these read WLAV…FTRL, LVGR…FVVG, LRLC…WYMV, LFCA…PTVI, and LVGC…GLVA. Position 246 (histidine 246) interacts with heme. A run of 3 helical transmembrane segments spans residues 248-268, 275-295, and 297-317; these read MSAF…FFYD, VFLV…TLLF, and IPID…GICV. Histidine 305 contacts heme.

The protein belongs to the COX15/CtaA family. Type 2 subfamily. Interacts with CtaB. Requires heme b as cofactor.

The protein localises to the cell membrane. The catalysed reaction is Fe(II)-heme o + 2 A + H2O = Fe(II)-heme a + 2 AH2. It functions in the pathway porphyrin-containing compound metabolism; heme A biosynthesis; heme A from heme O: step 1/1. Catalyzes the conversion of heme O to heme A by two successive hydroxylations of the methyl group at C8. The first hydroxylation forms heme I, the second hydroxylation results in an unstable dihydroxymethyl group, which spontaneously dehydrates, resulting in the formyl group of heme A. The chain is Heme A synthase from Neorickettsia sennetsu (strain ATCC VR-367 / Miyayama) (Ehrlichia sennetsu).